The chain runs to 459 residues: UDP-N-acetylmuramoylalanine--D-glutamate ligase (459 aa).

119-125 serves as a coordination point for ATP; sequence GTNGKTT.

The protein belongs to the MurCDEF family.

It is found in the cytoplasm. It catalyses the reaction UDP-N-acetyl-alpha-D-muramoyl-L-alanine + D-glutamate + ATP = UDP-N-acetyl-alpha-D-muramoyl-L-alanyl-D-glutamate + ADP + phosphate + H(+). It participates in cell wall biogenesis; peptidoglycan biosynthesis. Its function is as follows. Cell wall formation. Catalyzes the addition of glutamate to the nucleotide precursor UDP-N-acetylmuramoyl-L-alanine (UMA). The sequence is that of UDP-N-acetylmuramoylalanine--D-glutamate ligase from Lacticaseibacillus paracasei (strain ATCC 334 / BCRC 17002 / CCUG 31169 / CIP 107868 / KCTC 3260 / NRRL B-441) (Lactobacillus paracasei).